The following is a 359-amino-acid chain: 24-methylenesterol C-methyltransferase 3 (359 aa).

Residues 4-24 (VALYCTAGLIAGAVYWFICVL) traverse the membrane as a helical segment.

The protein belongs to the class I-like SAM-binding methyltransferase superfamily. Erg6/SMT family.

The protein localises to the membrane. It carries out the reaction 24-methylidenelophenol + S-adenosyl-L-methionine = (Z)-24-ethylidenelophenol + S-adenosyl-L-homocysteine + H(+). Its pathway is steroid biosynthesis; sterol biosynthesis. Catalyzes the methyl transfer from S-adenosyl-methionine to the methylene group of 24-methylene lophenol to form 24-ethylidene lophenol. This Arabidopsis thaliana (Mouse-ear cress) protein is 24-methylenesterol C-methyltransferase 3 (SMT3).